The following is a 275-amino-acid chain: 2,3,4,5-tetrahydropyridine-2,6-dicarboxylate N-succinyltransferase (275 aa).

Substrate contacts are provided by Arg-105 and Asp-142.

The protein belongs to the transferase hexapeptide repeat family. Homotrimer.

It localises to the cytoplasm. It carries out the reaction (S)-2,3,4,5-tetrahydrodipicolinate + succinyl-CoA + H2O = (S)-2-succinylamino-6-oxoheptanedioate + CoA. The protein operates within amino-acid biosynthesis; L-lysine biosynthesis via DAP pathway; LL-2,6-diaminopimelate from (S)-tetrahydrodipicolinate (succinylase route): step 1/3. The protein is 2,3,4,5-tetrahydropyridine-2,6-dicarboxylate N-succinyltransferase of Pectobacterium atrosepticum (strain SCRI 1043 / ATCC BAA-672) (Erwinia carotovora subsp. atroseptica).